The sequence spans 208 residues: EF-hand protein 5 variant 1 (208 aa).

The tract at residues M1–Q34 is disordered. 4 EF-hand domains span residues M64–E98, E99–D134, T135–R170, and S171–N206. The Ca(2+) site is built by E118, D123, D148, T152, and Y154.

This is EF-hand protein 5 variant 1 from Trypanosoma cruzi.